The primary structure comprises 1944 residues: Anaphase-promoting complex subunit 1 (1944 aa).

Phosphoserine is present on residues Ser-51, Ser-60, Ser-202, and Ser-286. Thr-291 carries the post-translational modification Phosphothreonine. Residues 305-343 are disordered; the sequence is LRSLSKGDSPVTSPFQNYSSIHSQSRSTSSPSLHSRSPS. Phosphoserine occurs at positions 313, 341, 343, 355, 362, 373, and 377. The segment covering 323–343 has biased composition (low complexity); sequence SSIHSQSRSTSSPSLHSRSPS. Residues 373–396 form a disordered region; it reads SHNQSPKRHSISHSPNSNSNGSFL. The span at 384 to 394 shows a compositional bias: low complexity; sequence SHSPNSNSNGS. The residue at position 537 (Thr-537) is a Phosphothreonine. Ser-547 and Ser-555 each carry phosphoserine. Phosphotyrosine is present on Tyr-571. Phosphoserine is present on residues Ser-686, Ser-688, and Ser-916. Residues 994 to 1016 form a disordered region; that stretch reads KGKSVLSSDVPSGTETEEEDDGM. Residues 998 to 1007 show a composition bias toward polar residues; it reads VLSSDVPSGT. 4 PC repeats span residues 1297–1325, 1366–1404, 1467–1501, and 1520–1552; these read AAGL…PEQL, GATL…PEFL, GACL…YLSA, and LLSL…EMNY.

Belongs to the APC1 family. The mammalian APC/C is composed at least of 14 distinct subunits ANAPC1, ANAPC2, CDC27/APC3, ANAPC4, ANAPC5, CDC16/APC6, ANAPC7, CDC23/APC8, ANAPC10, ANAPC11, CDC26/APC12, ANAPC13, ANAPC15 and ANAPC16 that assemble into a complex of at least 19 chains with a combined molecular mass of around 1.2 MDa; APC/C interacts with FZR1 and FBXO5. In terms of processing, phosphorylated. Phosphorylation on Ser-355 occurs specifically during mitosis.

It functions in the pathway protein modification; protein ubiquitination. Component of the anaphase promoting complex/cyclosome (APC/C), a cell cycle-regulated E3 ubiquitin ligase that controls progression through mitosis and the G1 phase of the cell cycle. The APC/C complex acts by mediating ubiquitination and subsequent degradation of target proteins: it mainly mediates the formation of 'Lys-11'-linked polyubiquitin chains and, to a lower extent, the formation of 'Lys-48'- and 'Lys-63'-linked polyubiquitin chains. The APC/C complex catalyzes assembly of branched 'Lys-11'-/'Lys-48'-linked branched ubiquitin chains on target proteins. In Homo sapiens (Human), this protein is Anaphase-promoting complex subunit 1 (ANAPC1).